Reading from the N-terminus, the 107-residue chain is Nucleoid-associated protein A1I_00660 (107 aa).

Residues 81–107 form a disordered region; sequence KCDSDSQNSMSGALSGMSLPPGFKMPF.

Belongs to the YbaB/EbfC family. In terms of assembly, homodimer.

The protein resides in the cytoplasm. Its subcellular location is the nucleoid. Functionally, binds to DNA and alters its conformation. May be involved in regulation of gene expression, nucleoid organization and DNA protection. The polypeptide is Nucleoid-associated protein A1I_00660 (Rickettsia bellii (strain OSU 85-389)).